The primary structure comprises 143 residues: Mannitol-specific phosphotransferase enzyme IIA component (143 aa).

The 141-residue stretch at 2 to 142 folds into the PTS EIIA type-2 domain; that stretch reads QVLAKENIKL…EDLIAIFNEV (141 aa). Histidine 62 (tele-phosphohistidine intermediate) is an active-site residue. At histidine 62 the chain carries Phosphohistidine; by HPr. Serine 74 carries the phosphoserine modification.

It localises to the cytoplasm. In terms of biological role, the phosphoenolpyruvate-dependent sugar phosphotransferase system (sugar PTS), a major carbohydrate active transport system, catalyzes the phosphorylation of incoming sugar substrates concomitantly with their translocation across the cell membrane. The enzyme II CmtAB PTS system is involved in D-mannitol transport. The protein is Mannitol-specific phosphotransferase enzyme IIA component (mtlF) of Bacillus subtilis (strain 168).